The sequence spans 264 residues: Thymidylate synthase (264 aa).

DUMP is bound by residues Arg-21 and 126-127; that span reads RR. Cys-146 (nucleophile) is an active-site residue. Residues 166-169, Asn-177, and 207-209 each bind dUMP; these read RSAD and HLY. A (6R)-5,10-methylene-5,6,7,8-tetrahydrofolate-binding site is contributed by Asp-169. Ala-263 contributes to the (6R)-5,10-methylene-5,6,7,8-tetrahydrofolate binding site.

Belongs to the thymidylate synthase family. Bacterial-type ThyA subfamily. As to quaternary structure, homodimer.

The protein resides in the cytoplasm. The catalysed reaction is dUMP + (6R)-5,10-methylene-5,6,7,8-tetrahydrofolate = 7,8-dihydrofolate + dTMP. It functions in the pathway pyrimidine metabolism; dTTP biosynthesis. Catalyzes the reductive methylation of 2'-deoxyuridine-5'-monophosphate (dUMP) to 2'-deoxythymidine-5'-monophosphate (dTMP) while utilizing 5,10-methylenetetrahydrofolate (mTHF) as the methyl donor and reductant in the reaction, yielding dihydrofolate (DHF) as a by-product. This enzymatic reaction provides an intracellular de novo source of dTMP, an essential precursor for DNA biosynthesis. The polypeptide is Thymidylate synthase (Bradyrhizobium sp. (strain ORS 278)).